The sequence spans 271 residues: Proteasome inhibitor PI31 subunit (271 aa).

Alanine 2 bears the N-acetylalanine mark. The tract at residues 2–150 is important for homodimerization and interaction with FBXO7; it reads AGLEVLFASA…PIHEQWEKAN (149 aa). Phosphoserine is present on serine 153. The residue at position 205 (arginine 205) is an Omega-N-methylarginine. At arginine 219 the chain carries Asymmetric dimethylarginine. The disordered stretch occupies residues 222 to 271; the sequence is IDPSSGLPNRLPPGAVPPGARFDPFGPIGTSPPGPNPDHLPPPGYDDMYL. Arginine 231 carries the post-translational modification Omega-N-methylarginine. Residues 251-265 are compositionally biased toward pro residues; that stretch reads TSPPGPNPDHLPPPG. Serine 252 bears the Phosphoserine mark.

Belongs to the proteasome inhibitor PI31 family. Monomer and homodimer. Interacts with FBXO7.

Its subcellular location is the cytoplasm. It localises to the endoplasmic reticulum. In terms of biological role, plays an important role in control of proteasome function. Inhibits the hydrolysis of protein and peptide substrates by the 20S proteasome. Also inhibits the activation of the proteasome by the proteasome regulatory proteins PA700 and PA28. The chain is Proteasome inhibitor PI31 subunit (PSMF1) from Pongo abelii (Sumatran orangutan).